The primary structure comprises 825 residues: Phenylalanine--tRNA ligase beta subunit (825 aa).

The region spanning R39–R154 is the tRNA-binding domain. The B5 domain maps to P411–E506. 4 residues coordinate Mg(2+): D484, D490, E493, and E494. Residues S731–R824 enclose the FDX-ACB domain.

This sequence belongs to the phenylalanyl-tRNA synthetase beta subunit family. Type 1 subfamily. As to quaternary structure, tetramer of two alpha and two beta subunits. Mg(2+) is required as a cofactor.

It localises to the cytoplasm. The catalysed reaction is tRNA(Phe) + L-phenylalanine + ATP = L-phenylalanyl-tRNA(Phe) + AMP + diphosphate + H(+). The chain is Phenylalanine--tRNA ligase beta subunit from Synechococcus sp. (strain JA-3-3Ab) (Cyanobacteria bacterium Yellowstone A-Prime).